Here is a 739-residue protein sequence, read N- to C-terminus: Phosphoribosylformylglycinamidine synthase subunit PurL (739 aa).

Residue H54 is part of the active site. Residues Y57 and K96 each coordinate ATP. E98 contributes to the Mg(2+) binding site. Substrate is bound by residues 99–102 and R121; that span reads SHNH. The active-site Proton acceptor is the H100. D122 is a Mg(2+) binding site. Q245 contacts substrate. D273 is a Mg(2+) binding site. Position 317–319 (317–319) interacts with substrate; that stretch reads ESQ. Residues D500 and G537 each coordinate ATP. A Mg(2+)-binding site is contributed by N538. Residue S540 coordinates substrate.

The protein belongs to the FGAMS family. In terms of assembly, monomer. Part of the FGAM synthase complex composed of 1 PurL, 1 PurQ and 2 PurS subunits.

It localises to the cytoplasm. The enzyme catalyses N(2)-formyl-N(1)-(5-phospho-beta-D-ribosyl)glycinamide + L-glutamine + ATP + H2O = 2-formamido-N(1)-(5-O-phospho-beta-D-ribosyl)acetamidine + L-glutamate + ADP + phosphate + H(+). The protein operates within purine metabolism; IMP biosynthesis via de novo pathway; 5-amino-1-(5-phospho-D-ribosyl)imidazole from N(2)-formyl-N(1)-(5-phospho-D-ribosyl)glycinamide: step 1/2. Functionally, part of the phosphoribosylformylglycinamidine synthase complex involved in the purines biosynthetic pathway. Catalyzes the ATP-dependent conversion of formylglycinamide ribonucleotide (FGAR) and glutamine to yield formylglycinamidine ribonucleotide (FGAM) and glutamate. The FGAM synthase complex is composed of three subunits. PurQ produces an ammonia molecule by converting glutamine to glutamate. PurL transfers the ammonia molecule to FGAR to form FGAM in an ATP-dependent manner. PurS interacts with PurQ and PurL and is thought to assist in the transfer of the ammonia molecule from PurQ to PurL. This is Phosphoribosylformylglycinamidine synthase subunit PurL from Bacillus cereus (strain ZK / E33L).